A 339-amino-acid polypeptide reads, in one-letter code: Phosphate acyltransferase (339 aa).

Belongs to the PlsX family. In terms of assembly, homodimer. Probably interacts with PlsY.

Its subcellular location is the cytoplasm. The enzyme catalyses a fatty acyl-[ACP] + phosphate = an acyl phosphate + holo-[ACP]. It participates in lipid metabolism; phospholipid metabolism. Its function is as follows. Catalyzes the reversible formation of acyl-phosphate (acyl-PO(4)) from acyl-[acyl-carrier-protein] (acyl-ACP). This enzyme utilizes acyl-ACP as fatty acyl donor, but not acyl-CoA. This is Phosphate acyltransferase from Moorella thermoacetica (strain ATCC 39073 / JCM 9320).